The following is a 423-amino-acid chain: Putative competence-damage inducible protein (423 aa).

Belongs to the CinA family.

The sequence is that of Putative competence-damage inducible protein from Streptococcus equi subsp. zooepidemicus (strain H70).